Reading from the N-terminus, the 482-residue chain is uncharacterized protein (482 aa).

2 stretches are compositionally biased toward low complexity: residues serine 24 to glutamine 86 and threonine 312 to isoleucine 339. Disordered regions lie at residues serine 24 to tyrosine 88 and leucine 307 to lysine 376. A compositionally biased stretch (acidic residues) spans glutamate 342 to serine 363.

This is an uncharacterized protein from Dictyostelium discoideum (Social amoeba).